A 612-amino-acid chain; its full sequence is 1,8-cineole synthase, chloroplastic (612 aa).

The N-terminal 52 residues, 1-52, are a transit peptide targeting the chloroplast; that stretch reads MALVSVAPLASRSCLSKSLISSTHELKPLRRTILPTLRWKSATPSINMCLTT. The Mg(2+) site is built by D363, D367, and D515. The DDXXD motif motif lies at 363-367; sequence DDIYD.

This sequence belongs to the terpene synthase family. Tpsd subfamily. Mg(2+) is required as a cofactor. Requires Mn(2+) as cofactor.

The protein resides in the plastid. It localises to the chloroplast. It carries out the reaction (2E)-geranyl diphosphate + H2O = 1,8-cineole + diphosphate. Its pathway is terpene metabolism; oleoresin biosynthesis. Its function is as follows. Terpene synthase (TPS) involved in the biosynthesis of monoterpene natural products included in conifer oleoresin secretions and volatile emissions; these compounds contribute to biotic and abiotic stress defense against herbivores and pathogens. Catalyzes the conversion of (2E)-geranyl diphosphate (GPP) to 1,8-cineole. The chain is 1,8-cineole synthase, chloroplastic from Picea sitchensis (Sitka spruce).